Reading from the N-terminus, the 226-residue chain is 7-cyano-7-deazaguanine synthase (226 aa).

8 to 18 (ISGGLDSTTCL) lines the ATP pocket. Residues C188, C198, C201, and C204 each coordinate Zn(2+).

It belongs to the QueC family. It depends on Zn(2+) as a cofactor.

The catalysed reaction is 7-carboxy-7-deazaguanine + NH4(+) + ATP = 7-cyano-7-deazaguanine + ADP + phosphate + H2O + H(+). Its pathway is purine metabolism; 7-cyano-7-deazaguanine biosynthesis. Its function is as follows. Catalyzes the ATP-dependent conversion of 7-carboxy-7-deazaguanine (CDG) to 7-cyano-7-deazaguanine (preQ(0)). The sequence is that of 7-cyano-7-deazaguanine synthase from Coxiella burnetii (strain RSA 331 / Henzerling II).